Reading from the N-terminus, the 342-residue chain is Phosphate acyltransferase (342 aa).

Belongs to the PlsX family. As to quaternary structure, homodimer. Probably interacts with PlsY.

It is found in the cytoplasm. The catalysed reaction is a fatty acyl-[ACP] + phosphate = an acyl phosphate + holo-[ACP]. It participates in lipid metabolism; phospholipid metabolism. In terms of biological role, catalyzes the reversible formation of acyl-phosphate (acyl-PO(4)) from acyl-[acyl-carrier-protein] (acyl-ACP). This enzyme utilizes acyl-ACP as fatty acyl donor, but not acyl-CoA. This is Phosphate acyltransferase from Blochmanniella pennsylvanica (strain BPEN).